The primary structure comprises 314 residues: MNIILANPRGFCAGVDRAISIVELALEIHGAPIYVRHEVVHNRFVVDGLKAKGAIFVEELDEVPDGAIVIFSAHGVSQAVRHEAKRRELKVFDATCPLVTKVHMQVARASKKGTKAILIGHEGHPEVVGTMGQYDNEKGGIFLVEDVEDIAKLGLKEDEDLTFMTQTTLSIDDTIDVIEALKQKYPAIQGPRKNDICYATTNRQQAVRELAKLAQLVLVVGSKNSSNSNRLAELASRMGTPSQLIDGPQDIDPNWLQGVTTIGITAGASAPEVLVQSVVEHLKTLGVTKVEELEGCEENTVFEVPRELRITEVN.

Residue cysteine 12 participates in [4Fe-4S] cluster binding. (2E)-4-hydroxy-3-methylbut-2-enyl diphosphate contacts are provided by histidine 41 and histidine 74. 2 residues coordinate dimethylallyl diphosphate: histidine 41 and histidine 74. Isopentenyl diphosphate-binding residues include histidine 41 and histidine 74. Position 96 (cysteine 96) interacts with [4Fe-4S] cluster. Histidine 124 contacts (2E)-4-hydroxy-3-methylbut-2-enyl diphosphate. A dimethylallyl diphosphate-binding site is contributed by histidine 124. Histidine 124 contributes to the isopentenyl diphosphate binding site. Glutamate 126 acts as the Proton donor in catalysis. Residue threonine 167 coordinates (2E)-4-hydroxy-3-methylbut-2-enyl diphosphate. Cysteine 197 contacts [4Fe-4S] cluster. The (2E)-4-hydroxy-3-methylbut-2-enyl diphosphate site is built by serine 225, serine 226, asparagine 227, and serine 269. Dimethylallyl diphosphate contacts are provided by serine 225, serine 226, asparagine 227, and serine 269. Positions 225, 226, 227, and 269 each coordinate isopentenyl diphosphate.

The protein belongs to the IspH family. [4Fe-4S] cluster is required as a cofactor.

The catalysed reaction is isopentenyl diphosphate + 2 oxidized [2Fe-2S]-[ferredoxin] + H2O = (2E)-4-hydroxy-3-methylbut-2-enyl diphosphate + 2 reduced [2Fe-2S]-[ferredoxin] + 2 H(+). It carries out the reaction dimethylallyl diphosphate + 2 oxidized [2Fe-2S]-[ferredoxin] + H2O = (2E)-4-hydroxy-3-methylbut-2-enyl diphosphate + 2 reduced [2Fe-2S]-[ferredoxin] + 2 H(+). The protein operates within isoprenoid biosynthesis; dimethylallyl diphosphate biosynthesis; dimethylallyl diphosphate from (2E)-4-hydroxy-3-methylbutenyl diphosphate: step 1/1. It participates in isoprenoid biosynthesis; isopentenyl diphosphate biosynthesis via DXP pathway; isopentenyl diphosphate from 1-deoxy-D-xylulose 5-phosphate: step 6/6. In terms of biological role, catalyzes the conversion of 1-hydroxy-2-methyl-2-(E)-butenyl 4-diphosphate (HMBPP) into a mixture of isopentenyl diphosphate (IPP) and dimethylallyl diphosphate (DMAPP). Acts in the terminal step of the DOXP/MEP pathway for isoprenoid precursor biosynthesis. The chain is 4-hydroxy-3-methylbut-2-enyl diphosphate reductase from Glaesserella parasuis serovar 5 (strain SH0165) (Haemophilus parasuis).